The primary structure comprises 448 residues: Exodeoxyribonuclease 7 large subunit (448 aa).

Belongs to the XseA family. Heterooligomer composed of large and small subunits.

It is found in the cytoplasm. It catalyses the reaction Exonucleolytic cleavage in either 5'- to 3'- or 3'- to 5'-direction to yield nucleoside 5'-phosphates.. In terms of biological role, bidirectionally degrades single-stranded DNA into large acid-insoluble oligonucleotides, which are then degraded further into small acid-soluble oligonucleotides. The chain is Exodeoxyribonuclease 7 large subunit from Enterococcus faecalis (strain ATCC 700802 / V583).